A 266-amino-acid polypeptide reads, in one-letter code: Thymidylate synthase (266 aa).

Arginine 24 lines the dUMP pocket. Histidine 54 serves as a coordination point for (6R)-5,10-methylene-5,6,7,8-tetrahydrofolate. DUMP is bound at residue 129 to 130 (RR). Cysteine 149 functions as the Nucleophile in the catalytic mechanism. DUMP is bound by residues 169-172 (RSAD), asparagine 180, and 210-212 (HIY). Aspartate 172 lines the (6R)-5,10-methylene-5,6,7,8-tetrahydrofolate pocket. Alanine 265 contacts (6R)-5,10-methylene-5,6,7,8-tetrahydrofolate.

It belongs to the thymidylate synthase family. Bacterial-type ThyA subfamily. In terms of assembly, homodimer.

The protein resides in the cytoplasm. The enzyme catalyses dUMP + (6R)-5,10-methylene-5,6,7,8-tetrahydrofolate = 7,8-dihydrofolate + dTMP. It participates in pyrimidine metabolism; dTTP biosynthesis. Its function is as follows. Catalyzes the reductive methylation of 2'-deoxyuridine-5'-monophosphate (dUMP) to 2'-deoxythymidine-5'-monophosphate (dTMP) while utilizing 5,10-methylenetetrahydrofolate (mTHF) as the methyl donor and reductant in the reaction, yielding dihydrofolate (DHF) as a by-product. This enzymatic reaction provides an intracellular de novo source of dTMP, an essential precursor for DNA biosynthesis. The sequence is that of Thymidylate synthase from Corynebacterium glutamicum (strain R).